Consider the following 272-residue polypeptide: Nitrogenase iron protein (272 aa).

Residue Gly8–Ser15 participates in ATP binding. Position 94 (Cys94) interacts with [4Fe-4S] cluster. At Arg97 the chain carries ADP-ribosylarginine; by dinitrogenase reductase ADP-ribosyltransferase. A [4Fe-4S] cluster-binding site is contributed by Cys129.

The protein belongs to the NifH/BchL/ChlL family. As to quaternary structure, homodimer. The cofactor is [4Fe-4S] cluster. Post-translationally, the reversible ADP-ribosylation of Arg-97 inactivates the nitrogenase reductase and regulates nitrogenase activity.

It carries out the reaction N2 + 8 reduced [2Fe-2S]-[ferredoxin] + 16 ATP + 16 H2O = H2 + 8 oxidized [2Fe-2S]-[ferredoxin] + 2 NH4(+) + 16 ADP + 16 phosphate + 6 H(+). Functionally, the key enzymatic reactions in nitrogen fixation are catalyzed by the nitrogenase complex, which has 2 components: the iron protein and the molybdenum-iron protein. The chain is Nitrogenase iron protein from Alkaliphilus metalliredigens (strain QYMF).